Here is a 656-residue protein sequence, read N- to C-terminus: Chaperone protein HtpG (656 aa).

Residues 1–364 form an a; substrate-binding region; sequence MSEQNPTDSK…SADLPLNVSR (364 aa). The segment at 365 to 583 is b; that stretch reads EILQESRDVK…EGELSPQMIQ (219 aa). Residues 584–656 are c; it reads MLKQMGQDVP…LRRVNELLMK (73 aa).

Belongs to the heat shock protein 90 family. In terms of assembly, homodimer.

The protein resides in the cytoplasm. Molecular chaperone. Has ATPase activity. This chain is Chaperone protein HtpG, found in Psychrobacter arcticus (strain DSM 17307 / VKM B-2377 / 273-4).